The chain runs to 156 residues: Ribonuclease 7 (156 aa).

A signal peptide spans 1–28 (MAPARAGFCPLLLLLLLGLWVAEIPVSA). The segment at 29 to 32 (KPKG) is important for antibacterial activity. Catalysis depends on histidine 43, which acts as the Proton acceptor. DUMP is bound by residues histidine 43, lysine 66, asparagine 69, and threonine 70. 4 disulfide bridges follow: cysteine 51/cysteine 109, cysteine 65/cysteine 119, cysteine 83/cysteine 134, and cysteine 90/cysteine 97. A glycan (N-linked (GlcNAc...) asparagine) is linked at asparagine 127. Positions 139–140 (KK) are important for antibacterial activity. Residues histidine 151 and arginine 154 each coordinate dUMP. Catalysis depends on histidine 151, which acts as the Proton donor.

Expressed in collecting ducts in kidney, and in apical uroepithelium in bladder (at protein level). Expressed in various epithelial tissues including skin, respiratory tract, genito-urinary tract and, at a low level, in the gut. Expressed in liver, kidney, skeletal muscle and heart.

The protein localises to the secreted. Exhibits a potent RNase activity. Has broad-spectrum antimicrobial activity against many pathogenic microorganisms including uropathogenic E.coli (UPEC), and remarkably potent activity (lethal dose of 90% &lt; 30 nM) against a vancomycin resistant Enterococcus faecium. Causes loss of bacterial membrane integrity. Probably contributes to urinary tract sterility. Bactericidal activity is independent of RNase activity. This chain is Ribonuclease 7 (RNASE7), found in Homo sapiens (Human).